The sequence spans 172 residues: Single-stranded DNA-binding protein 2 (172 aa).

Residues 6-111 (VNKVILVGHI…VIVNVGGTMQ (106 aa)) enclose the SSB domain. A DNA-binding region spans residues 55 to 61 (WHRVVVF). The segment at 113–172 (LGRHNSQPQQEPQTPPTAAKGEGKAVKGAGNAAKGKNAAAPQQPPAQPDPAYDFDDDIPF) is disordered. The segment covering 119–153 (QPQQEPQTPPTAAKGEGKAVKGAGNAAKGKNAAAP) has biased composition (low complexity). Positions 167–172 (DDDIPF) match the Important for interaction with partner proteins motif.

In terms of assembly, homotetramer.

Plays an important role in DNA replication, recombination and repair. Binds to ssDNA and to an array of partner proteins to recruit them to their sites of action during DNA metabolism. This Salmonella typhimurium (strain LT2 / SGSC1412 / ATCC 700720) protein is Single-stranded DNA-binding protein 2 (ssb2).